Reading from the N-terminus, the 950-residue chain is A disintegrin and metalloproteinase with thrombospondin motifs 15 (950 aa).

An N-terminal signal peptide occupies residues 1–17 (MLLLGILTLAFAGRTAG). Positions 18–212 (GSEPEREVVV…SRRRSGRAKR (195 aa)) are excised as a propeptide. N-linked (GlcNAc...) asparagine glycosylation is present at asparagine 141. The tract at residues 151–172 (SQGAHLLQRRGVPGGPSGDPTS) is disordered. The short motif at 172-179 (SRCGVASG) is the Cysteine switch element. Cysteine 174 lines the Zn(2+) pocket. Residues 218 to 427 (RYVETLVVAD…GHGDCLLDQP (210 aa)) form the Peptidase M12B domain. Disulfide bonds link cysteine 293–cysteine 345, cysteine 322–cysteine 327, cysteine 339–cysteine 422, cysteine 377–cysteine 406, cysteine 448–cysteine 470, cysteine 459–cysteine 480, cysteine 465–cysteine 499, cysteine 493–cysteine 504, cysteine 528–cysteine 565, cysteine 532–cysteine 570, and cysteine 543–cysteine 555. Position 361 (histidine 361) interacts with Zn(2+). The active site involves glutamate 362. Histidine 365 and histidine 371 together coordinate Zn(2+). A Disintegrin domain is found at 428 to 515 (SKPISLPEDL…ERHNLNKHRV (88 aa)). One can recognise a TSP type-1 1 domain in the interval 516 to 571 (DGSWAKWDPYGPCSRTCGGGVQLARRQCTNPTPANGGKYCEGVRVKYRSCNLEPCP). Residues asparagine 591, asparagine 623, and asparagine 679 are each glycosylated (N-linked (GlcNAc...) asparagine). The spacer stretch occupies residues 701–838 (AIPAGASSID…SNQVEQPDDR (138 aa)). The tract at residues 798–822 (FYLPKEPREDKSSHPKDPRGPSVLH) is disordered. Over residues 802–816 (KEPREDKSSHPKDPR) the composition is skewed to basic and acidic residues. 2 TSP type-1 domains span residues 839-895 (PPAR…EPCP) and 896-949 (TWEL…VLRP).

The cofactor is Zn(2+). In terms of processing, the precursor is cleaved by a furin endopeptidase. Glycosylated. Can be O-fucosylated by POFUT2 on a serine or a threonine residue found within the consensus sequence C1-X(2)-(S/T)-C2-G of the TSP type-1 repeat domains where C1 and C2 are the first and second cysteine residue of the repeat, respectively. Fucosylated repeats can then be further glycosylated by the addition of a beta-1,3-glucose residue by the glucosyltransferase, B3GALTL. Fucosylation mediates the efficient secretion of ADAMTS family members. Can be C-glycosylated with one or two mannose molecules on tryptophan residues within the consensus sequence W-X-X-W of the TPRs. Also N-glycosylated. These other glycosylations can also facilitate secretion. As to expression, expressed in fetal liver and kidney, but not in any of the adult tissues examined.

The protein localises to the secreted. It is found in the extracellular space. It localises to the extracellular matrix. Its subcellular location is the cell surface. Functionally, metalloprotease which has proteolytic activity against the proteoglycan VCAN, cleaving it at the 'Glu-1428-|-1429-Ala' site. Cleaves VCAN in the pericellular matrix surrounding myoblasts, facilitating myoblast contact and fusion which is required for skeletal muscle development and regeneration. The sequence is that of A disintegrin and metalloproteinase with thrombospondin motifs 15 (ADAMTS15) from Homo sapiens (Human).